The primary structure comprises 328 residues: Ribosomal RNA small subunit methyltransferase H (328 aa).

S-adenosyl-L-methionine is bound by residues 37-39 (GGH), aspartate 57, phenylalanine 83, aspartate 104, and glutamine 111.

It belongs to the methyltransferase superfamily. RsmH family.

Its subcellular location is the cytoplasm. The catalysed reaction is cytidine(1402) in 16S rRNA + S-adenosyl-L-methionine = N(4)-methylcytidine(1402) in 16S rRNA + S-adenosyl-L-homocysteine + H(+). Functionally, specifically methylates the N4 position of cytidine in position 1402 (C1402) of 16S rRNA. The chain is Ribosomal RNA small subunit methyltransferase H from Neisseria meningitidis serogroup A / serotype 4A (strain DSM 15465 / Z2491).